The sequence spans 229 residues: uncharacterized protein (229 aa).

The next 7 helical transmembrane spans lie at Met1–Phe21, Ile32–His52, Tyr58–Leu78, Thr100–Leu120, Ile139–Trp159, Leu178–Leu198, and Leu206–Gly226.

Its subcellular location is the cell membrane. This is an uncharacterized protein from Bacillus subtilis (strain 168).